Here is a 765-residue protein sequence, read N- to C-terminus: Carboxysome assembly protein CsoS2 (765 aa).

Positions 1–22 are enriched in basic and acidic residues; it reads MSTKTSREIALERRKAMSDGGK. Disordered regions lie at residues 1-107 and 165-229; these read MSTK…RTDV and REAQ…NKNG. Residues 1-215 form an N-terminal domain region; sequence MSTKTSREIA…RSKTGSTSKQ (215 aa). Residues 7–22 form an N-repeat 1 repeat; that stretch reads REIALERRKAMSDGGK. Residues 38 to 63 show a composition bias toward polar residues; sequence SQDINSTGATSSNKKVLTSPSKSNIP. Basic and acidic residues predominate over residues 77–87; it reads SSKELGIERRK. 3 N-repeat repeats span residues 79 to 94, 158 to 173, and 196 to 211; these read KELG…THGK, RDIV…KHGK, and REIS…KTGS. Over residues 187–207 the composition is skewed to basic and acidic residues; it reads RRGDPDLSSREISQRVRELRS. The interval 216–586 is middle region; sequence GNGKCRPCGP…LSNCETPPND (371 aa). 6 M-repeat repeats span residues 240–289, 300–349, 358–397, 411–460, 470–519, and 530–580; these read KVGK…GQFC, RASV…KKYC, KVMQ…GDQY, KVGS…EKFC, KVGL…NDNC, and RATV…LSNC. Disordered regions lie at residues 306–328 and 367–413; these read TTSG…GDEP and GLKV…EKVG. Positions 589–734 are C-terminal domain; the sequence is YANQEKSASN…AMPPVDNKRN (146 aa). C-repeat repeat units follow at residues 604 to 648 and 677 to 711; these read SVNS…GTEQ and KKEP…EGVS. 2 disordered regions span residues 611 to 637 and 656 to 765; these read EKYS…GPFD and NMTY…GARG. Positions 730 to 741 are enriched in basic and acidic residues; the sequence is DNKRNDETEKPD. Residues 735 to 765 are C-terminal peptide; the sequence is DETEKPDFLITGSSGNTRDGQLVTFSGGARG.

The protein belongs to the CsoS2 family. In terms of assembly, probably interacts with the carboxysome major shell protein CsoS1 via the N-terminal domain. A CsoS1-CsoS1D-CsoS2 complex can be isolated following expression in E.coli. Interacts via its N-terminal repeats with RuBisCO. In terms of processing, unlike H.neapolitanus and predictions for P.marinus strain MIT 9313, this protein is not thought to have ribosomal frameshifting.

The protein localises to the carboxysome. Functionally, required for alpha-carboxysome (Cb) assembly, mediates interaction between RuBisCO and the Cb shell. The protein is probably highly flexible. The C-terminal repeats act as the encapsulation signal to target proteins to the Cb; they are necessary and sufficient to target both CsoS2 and foreign proteins to the Cb. The N-terminal repeats of this protein bind simultaneously to both subunits of RuBisCO. Probably also interacts with the major shell proteins (CsoS1); that interaction would increase the local concentration of CsoS2 so that it can condense RuBisCO and full carboxysomes can be formed. There are estimated to be 163 CsoS2 proteins per carboxysome; unlike H.neapolitanus only 1 form is seen. The protein is Carboxysome assembly protein CsoS2 of Prochlorococcus marinus subsp. pastoris (strain CCMP1986 / NIES-2087 / MED4).